The sequence spans 837 residues: MKLSPREIEKLDLHNAGYLAQKRLARGLRLNYVETVALIATQILEFVRDGEKTVAQLMCIGRELLGRKQVLPAVPHLVESVQVEATFRDGTKLVTIHDLFACENGNLELALFGSFLPVPSLDKFTENEEDHRTPGEIICRSENLILNPRRNAIILRVVNKGDRPIQVGSHYHFIEVNPYLTFDRRKAYGMRLNIAAGNATRFEPGECKSVVLVSIGGNKVIRGGNNIADGPVNDSNCRAAMKAVVTRGFGHVEEENAREGVTGEDYSLTTVISREEYAHKYGPTTGDKIRLGDTDLFAEIEKDFAVYGDECVFGGGKVIRDGMGQSSGHPPEGSLDTVITNAVIIDYTGIIKADIGIKDGLIISTGKAGNPDIMNDVFPNMIIGANTEVIAGEGLIVTAGAIDCHVHFICPQLVYDAVTSGITTLVGGGTGPADGTRATTCTPAPNQMKLMLQSTDDMPLNFGFTGKGNSAKPDELHEIIRAGAMGLKLHEDWGTTPAAIDSCLTVADQYDIQVNIHTDTLNESGFVEHTIAAFKGRTIHTYHSEGAGGGHAPDIIKVCGEKNVLPSSTNPTRPYTHNTIDEHLDMLMVCHHLNKNIPEDVAFAESRIRAETIAAEDILHDKGAISIISSDSQAMGRIGEVISRTWQTADKMKSQRGPLQPGEDNDNFRIKRYVAKYTINPAIANGLSQYVGSVEAGKLADLVLWKPSFFGAKPEMVIKGGEVAYANMGDPNASIPTPEPVIMRPMFGAFGKAGSSHSIAFVSKAALDEGVKASYGLNKRVEAVKNVRKLTKRDMKLNDTLPQITVDPETYTVTADGEVLTCTAAKTVPLSRNYFLF.

The region spanning 400-837 is the Urease domain; that stretch reads GAIDCHVHFI…VPLSRNYFLF (438 aa). 3 residues coordinate Ni(2+): H405, H407, and K488. Residue K488 is modified to N6-carboxylysine. H490 is a binding site for substrate. Ni(2+) contacts are provided by H517 and H543. The active-site Proton donor is H591. D631 is a binding site for Ni(2+).

Belongs to the metallo-dependent hydrolases superfamily. Urease alpha subunit family. In terms of assembly, homohexamer. Other oligomeric forms may exist depending on pH and presence of salts. It depends on Ni(2+) as a cofactor. In terms of processing, carboxylation allows a single lysine to coordinate two nickel ions.

It carries out the reaction urea + 2 H2O + H(+) = hydrogencarbonate + 2 NH4(+). It functions in the pathway nitrogen metabolism; urea degradation; CO(2) and NH(3) from urea (urease route): step 1/1. Functionally, catalyzes the conversion of urea to ammonia and carbon dioxide, thus allowing organisms to use exogenous and internally generated urea as a nitrogen source. May be involved in plant defense to pathogenic fungi. The protein is Urease of Glycine max (Soybean).